Consider the following 894-residue polypeptide: Sorting nexin-14 (894 aa).

The 175-residue stretch at 78 to 252 folds into the PXA domain; that stretch reads SSKVDASLSE…LLIIFIDDSP (175 aa). The region spanning 284 to 416 is the RGS domain; sequence ELKQIREQQD…CHSDEYFRQL (133 aa). Ser496 is modified (phosphoserine). The PX domain occupies 518 to 638; it reads PYVDFFEDPS…DFLSPNGGET (121 aa).

It belongs to the sorting nexin family.

The protein resides in the cytoplasm. It is found in the cell projection. It localises to the dendrite. Functionally, plays a role in maintaining normal neuronal excitability and synaptic transmission. May be involved in several stages of intracellular trafficking. This is Sorting nexin-14 (SNX14) from Pongo abelii (Sumatran orangutan).